Here is a 549-residue protein sequence, read N- to C-terminus: DNA ligase 1 (549 aa).

ATP is bound at residue Glu-212. Catalysis depends on Lys-214, which acts as the N6-AMP-lysine intermediate. Positions 219, 234, 264, 310, 387, and 393 each coordinate ATP.

This sequence belongs to the ATP-dependent DNA ligase family. The cofactor is Mg(2+).

The catalysed reaction is ATP + (deoxyribonucleotide)n-3'-hydroxyl + 5'-phospho-(deoxyribonucleotide)m = (deoxyribonucleotide)n+m + AMP + diphosphate.. Its function is as follows. DNA ligase that seals nicks in double-stranded DNA during DNA replication, DNA recombination and DNA repair. The protein is DNA ligase 1 of Methanosarcina barkeri (strain Fusaro / DSM 804).